We begin with the raw amino-acid sequence, 439 residues long: Potassium/proton antiporter CemA (439 aa).

The next 6 helical transmembrane spans lie at 55–75, 79–99, 220–240, 317–337, 364–384, and 399–419; these read IMLY…WSLL, ISLF…NFFN, YMLF…IWFL, LLHL…FILG, ILLL…EIVI, and IISC…KYWI.

Belongs to the CemA family.

Its subcellular location is the plastid. It localises to the chloroplast inner membrane. It catalyses the reaction K(+)(in) + H(+)(out) = K(+)(out) + H(+)(in). In terms of biological role, contributes to K(+)/H(+) antiport activity by supporting proton efflux to control proton extrusion and homeostasis in chloroplasts in a light-dependent manner to modulate photosynthesis. Prevents excessive induction of non-photochemical quenching (NPQ) under continuous-light conditions. Indirectly promotes efficient inorganic carbon uptake into chloroplasts. This chain is Potassium/proton antiporter CemA, found in Physcomitrium patens (Spreading-leaved earth moss).